Reading from the N-terminus, the 412-residue chain is Peptidase T (412 aa).

Residue His84 participates in Zn(2+) binding. Asp86 is a catalytic residue. Asp146 is a binding site for Zn(2+). Glu179 serves as the catalytic Proton acceptor. Glu180, Asp202, and His385 together coordinate Zn(2+).

The protein belongs to the peptidase M20B family. Zn(2+) serves as cofactor.

It is found in the cytoplasm. It catalyses the reaction Release of the N-terminal residue from a tripeptide.. Cleaves the N-terminal amino acid of tripeptides. This chain is Peptidase T, found in Haemophilus influenzae (strain ATCC 51907 / DSM 11121 / KW20 / Rd).